Reading from the N-terminus, the 293-residue chain is Ribosomal protein L11 methyltransferase (293 aa).

The S-adenosyl-L-methionine site is built by Thr-145, Gly-166, Asp-188, and Asn-230.

This sequence belongs to the methyltransferase superfamily. PrmA family.

Its subcellular location is the cytoplasm. The catalysed reaction is L-lysyl-[protein] + 3 S-adenosyl-L-methionine = N(6),N(6),N(6)-trimethyl-L-lysyl-[protein] + 3 S-adenosyl-L-homocysteine + 3 H(+). In terms of biological role, methylates ribosomal protein L11. This Shewanella pealeana (strain ATCC 700345 / ANG-SQ1) protein is Ribosomal protein L11 methyltransferase.